Reading from the N-terminus, the 180-residue chain is MSRIGRLPIKIPDTVKIDVKDNLVIVEGIRGRLVQNIKDSINVKVENGSVIVGRVFNDKKAKAYHGLYRSLIFNMIKGVTEGFSKSLTINGIGYRAEQQGNSLFLSLGYSTQFEYVIPDGVSVKLDGNTKISVEGIDKFKVGQVAAEIRSLKKPEPYKGKGIKYDNEIIRRKVGKSGVKK.

It belongs to the universal ribosomal protein uL6 family. As to quaternary structure, part of the 50S ribosomal subunit.

This protein binds to the 23S rRNA, and is important in its secondary structure. It is located near the subunit interface in the base of the L7/L12 stalk, and near the tRNA binding site of the peptidyltransferase center. The chain is Large ribosomal subunit protein uL6 from Borreliella afzelii (strain PKo) (Borrelia afzelii).